Reading from the N-terminus, the 652-residue chain is Acetyl-coenzyme A synthetase (652 aa).

Residues 191-194 (RAGR), Thr311, and Asn335 contribute to the CoA site. ATP is bound by residues 387–389 (GEP), 411–416 (DTWWQT), Asp500, and Arg515. Residue Ser523 coordinates CoA. Arg526 serves as a coordination point for ATP. Residues Val537, His539, and Ile542 each contribute to the Mg(2+) site. Arg584 is a CoA binding site. At Lys609 the chain carries N6-acetyllysine.

It belongs to the ATP-dependent AMP-binding enzyme family. Mg(2+) serves as cofactor. Post-translationally, acetylated. Deacetylation by the SIR2-homolog deacetylase activates the enzyme.

The enzyme catalyses acetate + ATP + CoA = acetyl-CoA + AMP + diphosphate. Catalyzes the conversion of acetate into acetyl-CoA (AcCoA), an essential intermediate at the junction of anabolic and catabolic pathways. Acs undergoes a two-step reaction. In the first half reaction, Acs combines acetate with ATP to form acetyl-adenylate (AcAMP) intermediate. In the second half reaction, it can then transfer the acetyl group from AcAMP to the sulfhydryl group of CoA, forming the product AcCoA. Functionally, enables the cell to use acetate during aerobic growth to generate energy via the TCA cycle, and biosynthetic compounds via the glyoxylate shunt. Acetylates CheY, the response regulator involved in flagellar movement and chemotaxis. The chain is Acetyl-coenzyme A synthetase from Cronobacter sakazakii (strain ATCC BAA-894) (Enterobacter sakazakii).